The sequence spans 22 residues: Unknown protein from spot 168 of 2D-PAGE of etiolated coleoptile (22 aa).

The polypeptide is Unknown protein from spot 168 of 2D-PAGE of etiolated coleoptile (Zea mays (Maize)).